The primary structure comprises 661 residues: Ubiquitin carboxyl-terminal hydrolase 25 (661 aa).

Residues 24 to 335 (LGLRNLGNTC…KAYILFFSRS (312 aa)) enclose the USP domain. Cysteine 33 functions as the Nucleophile in the catalytic mechanism. The Proton acceptor role is filled by histidine 294. Disordered regions lie at residues 387–406 (GNLA…RAEQ) and 449–558 (FHQD…LCSS). Over residues 449–461 (FHQDENIAPKANK) the composition is skewed to basic and acidic residues. Polar residues-rich tracts occupy residues 462–475 (ENSV…VNSG) and 545–558 (NGVS…LCSS).

The protein belongs to the peptidase C19 family.

It carries out the reaction Thiol-dependent hydrolysis of ester, thioester, amide, peptide and isopeptide bonds formed by the C-terminal Gly of ubiquitin (a 76-residue protein attached to proteins as an intracellular targeting signal).. Its function is as follows. Recognizes and hydrolyzes the peptide bond at the C-terminal Gly of ubiquitin. Involved in the processing of poly-ubiquitin precursors as well as that of ubiquitinated proteins. This is Ubiquitin carboxyl-terminal hydrolase 25 (UBP25) from Arabidopsis thaliana (Mouse-ear cress).